Here is a 101-residue protein sequence, read N- to C-terminus: C-X-C motif chemokine 3 (101 aa).

An N-terminal signal peptide occupies residues 1 to 32; that stretch reads MAPPTRRLLNAALLLLLLLMATSHQPSGTVVA. Cystine bridges form between Cys-37–Cys-63 and Cys-39–Cys-79.

Belongs to the intercrine alpha (chemokine CxC) family.

The protein localises to the secreted. In terms of biological role, ligand for CXCR2. Has chemotactic activity for neutrophils. May play a role in inflammation and exert its effects on endothelial cells in an autocrine fashion. This Rattus norvegicus (Rat) protein is C-X-C motif chemokine 3 (Cxcl3).